The sequence spans 202 residues: Nucleoside triphosphate pyrophosphatase (202 aa).

The active-site Proton acceptor is Asp79.

The protein belongs to the Maf family. It depends on a divalent metal cation as a cofactor.

Its subcellular location is the cytoplasm. The enzyme catalyses a ribonucleoside 5'-triphosphate + H2O = a ribonucleoside 5'-phosphate + diphosphate + H(+). It carries out the reaction a 2'-deoxyribonucleoside 5'-triphosphate + H2O = a 2'-deoxyribonucleoside 5'-phosphate + diphosphate + H(+). Nucleoside triphosphate pyrophosphatase. May have a dual role in cell division arrest and in preventing the incorporation of modified nucleotides into cellular nucleic acids. The sequence is that of Nucleoside triphosphate pyrophosphatase from Bradyrhizobium diazoefficiens (strain JCM 10833 / BCRC 13528 / IAM 13628 / NBRC 14792 / USDA 110).